Consider the following 402-residue polypeptide: MLSEKTIEIVKSTVPLLQEKGVEITTRFYEILFSEHPELLNIFNHTNQKKGRQQQALANAVYAAATYIDNLEAIIPVVKQIGHKHRSLGIKAEHYPIVGTCLLRAIKEVAGAPDEVLNAWGEAYGVIADAFISIEAEMYEEAAHKEGGWKDFRNFVVVKKVKESDVITSLYLKPEDGGKVSSFIPGQYVTVQINIEGETYTHNRQYSLSDAPGKEYYRISVKKEKGVDTPDGKVSNYLHDHVKEGDMLPVSAPAGDFVLNMDSTLPVVLISGGVGITPMMSMLNTLIEQDSKRNVCFVHAAINSNTHAMKEHVEAVDNEYEQVKAYTCYSAPTEKDLEMKNFDKEGFVEREWLQTIIPTTEAEFYFCGPVPFMKHINAVLTDLGVKQEHIHYEFFGPAASLQ.

The Globin domain maps to 1-136 (MLSEKTIEIV…IADAFISIEA (136 aa)). A heme b-binding site is contributed by His-85. Active-site charge relay system residues include Tyr-95 and Glu-135. Residues 147-402 (GGWKDFRNFV…EFFGPAASLQ (256 aa)) are reductase. An FAD-binding FR-type domain is found at 150-260 (KDFRNFVVVK…SAPAGDFVLN (111 aa)). FAD contacts are provided by residues Tyr-188 and 204-207 (RQYS). Position 273-278 (273-278 (GVGITP)) interacts with NADP(+). Position 394–397 (394–397 (FFGP)) interacts with FAD.

The protein belongs to the globin family. Two-domain flavohemoproteins subfamily. It in the C-terminal section; belongs to the flavoprotein pyridine nucleotide cytochrome reductase family. Requires heme b as cofactor. FAD serves as cofactor.

The catalysed reaction is 2 nitric oxide + NADPH + 2 O2 = 2 nitrate + NADP(+) + H(+). The enzyme catalyses 2 nitric oxide + NADH + 2 O2 = 2 nitrate + NAD(+) + H(+). In terms of biological role, is involved in NO detoxification in an aerobic process, termed nitric oxide dioxygenase (NOD) reaction that utilizes O(2) and NAD(P)H to convert NO to nitrate, which protects the bacterium from various noxious nitrogen compounds. Therefore, plays a central role in the inducible response to nitrosative stress. The chain is Flavohemoprotein from Bacillus anthracis.